We begin with the raw amino-acid sequence, 163 residues long: Transmembrane protein 278 (163 aa).

Residues 1 to 37 are disordered; sequence MSEQGRETEEEEGGGGASDTAPMLPRGPPDHQASALT. The next 2 helical transmembrane spans lie at 51 to 71 and 105 to 125; these read LLAG…LVLL and AALI…ASAV. Residues 136-148 are compositionally biased toward pro residues; that stretch reads LLPPPAGTPGPRR. Residues 136–156 form a disordered region; that stretch reads LLPPPAGTPGPRRPPGRPDED.

It belongs to the TMEM88 family.

It is found in the membrane. The chain is Transmembrane protein 278 from Homo sapiens (Human).